The primary structure comprises 127 residues: Large ribosomal subunit protein uL24 (127 aa).

This sequence belongs to the universal ribosomal protein uL24 family. Component of the large ribosomal subunit. Mature ribosomes consist of a small (40S) and a large (60S) subunit. The 40S subunit contains about 32 different proteins and 1 molecule of RNA (18S). The 60S subunit contains 45 different proteins and 3 molecules of RNA (25S, 5.8S and 5S).

It localises to the cytoplasm. Component of the ribosome, a large ribonucleoprotein complex responsible for the synthesis of proteins in the cell. The small ribosomal subunit (SSU) binds messenger RNAs (mRNAs) and translates the encoded message by selecting cognate aminoacyl-transfer RNA (tRNA) molecules. The large subunit (LSU) contains the ribosomal catalytic site termed the peptidyl transferase center (PTC), which catalyzes the formation of peptide bonds, thereby polymerizing the amino acids delivered by tRNAs into a polypeptide chain. The nascent polypeptides leave the ribosome through a tunnel in the LSU and interact with protein factors that function in enzymatic processing, targeting, and the membrane insertion of nascent chains at the exit of the ribosomal tunnel. The polypeptide is Large ribosomal subunit protein uL24 (Candida albicans (strain SC5314 / ATCC MYA-2876) (Yeast)).